The primary structure comprises 122 residues: Holo-[acyl-carrier-protein] synthase (122 aa).

Asp8 and Glu56 together coordinate Mg(2+).

It belongs to the P-Pant transferase superfamily. AcpS family. Mg(2+) serves as cofactor.

The protein localises to the cytoplasm. The catalysed reaction is apo-[ACP] + CoA = holo-[ACP] + adenosine 3',5'-bisphosphate + H(+). Functionally, transfers the 4'-phosphopantetheine moiety from coenzyme A to a Ser of acyl-carrier-protein. The polypeptide is Holo-[acyl-carrier-protein] synthase (Alkaliphilus metalliredigens (strain QYMF)).